The chain runs to 253 residues: 1-(5-phosphoribosyl)-5-[(5-phosphoribosylamino)methylideneamino] imidazole-4-carboxamide isomerase (253 aa).

The Proton acceptor role is filled by Asp-8. Catalysis depends on Asp-131, which acts as the Proton donor.

It belongs to the HisA/HisF family.

Its subcellular location is the cytoplasm. The catalysed reaction is 1-(5-phospho-beta-D-ribosyl)-5-[(5-phospho-beta-D-ribosylamino)methylideneamino]imidazole-4-carboxamide = 5-[(5-phospho-1-deoxy-D-ribulos-1-ylimino)methylamino]-1-(5-phospho-beta-D-ribosyl)imidazole-4-carboxamide. The protein operates within amino-acid biosynthesis; L-histidine biosynthesis; L-histidine from 5-phospho-alpha-D-ribose 1-diphosphate: step 4/9. The protein is 1-(5-phosphoribosyl)-5-[(5-phosphoribosylamino)methylideneamino] imidazole-4-carboxamide isomerase of Polynucleobacter asymbioticus (strain DSM 18221 / CIP 109841 / QLW-P1DMWA-1) (Polynucleobacter necessarius subsp. asymbioticus).